Consider the following 68-residue polypeptide: Conotoxin PnMLKM-011 (68 aa).

A signal peptide spans 1 to 17; that stretch reads MGVVLFIFLVLFPLATL. Residues 18 to 51 constitute a propeptide that is removed on maturation; it reads QLDPDQPVERYAENKQLLNPDERRGIILHALGQR. Cystine bridges form between C53–C65, C54–C63, and C59–C66. Leucine amide is present on L67.

This sequence belongs to the conotoxin M superfamily. In terms of tissue distribution, expressed by the venom duct.

It is found in the secreted. The protein is Conotoxin PnMLKM-011 of Conus pennaceus (Feathered cone).